Consider the following 101-residue polypeptide: MVGLSHYLILGSLLFAISVVGIFLNRKNVIVLLMAIELMLLAVNLNFIAFSHYLQDTAGQVFVFFILTVAAAESAIGLAILVVLFRNLKTINVDDINSLKG.

A run of 3 helical transmembrane segments spans residues 4–24 (LSHY…GIFL), 30–50 (IVLL…FIAF), and 61–81 (VFVF…LAIL).

Belongs to the complex I subunit 4L family. As to quaternary structure, NDH-1 is composed of 14 different subunits. Subunits NuoA, H, J, K, L, M, N constitute the membrane sector of the complex.

It is found in the cell inner membrane. The catalysed reaction is a quinone + NADH + 5 H(+)(in) = a quinol + NAD(+) + 4 H(+)(out). In terms of biological role, NDH-1 shuttles electrons from NADH, via FMN and iron-sulfur (Fe-S) centers, to quinones in the respiratory chain. The immediate electron acceptor for the enzyme in this species is believed to be ubiquinone. Couples the redox reaction to proton translocation (for every two electrons transferred, four hydrogen ions are translocated across the cytoplasmic membrane), and thus conserves the redox energy in a proton gradient. This chain is NADH-quinone oxidoreductase subunit K, found in Methylovorus glucosotrophus (strain SIP3-4).